Reading from the N-terminus, the 34-residue chain is Photosystem II reaction center protein Psb30 (34 aa).

The helical transmembrane segment at 6–26 threads the bilayer; that stretch reads IVAQLLSLALVTLSGPAVIFL.

This sequence belongs to the Psb30/Ycf12 family. As to quaternary structure, PSII is composed of 1 copy each of membrane proteins PsbA, PsbB, PsbC, PsbD, PsbE, PsbF, PsbH, PsbI, PsbJ, PsbK, PsbL, PsbM, PsbT, PsbX, PsbY, PsbZ, Psb30/Ycf12, peripheral proteins of the oxygen-evolving complex and a large number of cofactors. It forms dimeric complexes.

The protein localises to the plastid. It is found in the chloroplast thylakoid membrane. In terms of biological role, a core subunit of photosystem II (PSII), probably helps stabilize the reaction center. The protein is Photosystem II reaction center protein Psb30 of Emiliania huxleyi (Coccolithophore).